The primary structure comprises 233 residues: Purine nucleoside phosphorylase DeoD-type (233 aa).

His4 contributes to the a purine D-ribonucleoside binding site. Residues Gly20, Arg24, Arg43, and 87–90 (RVGT) contribute to the phosphate site. A purine D-ribonucleoside is bound by residues Glu162, 179–181 (EME), and 203–204 (SD). Asp204 (proton donor) is an active-site residue.

Belongs to the PNP/UDP phosphorylase family. As to quaternary structure, homohexamer; trimer of homodimers.

The catalysed reaction is a purine D-ribonucleoside + phosphate = a purine nucleobase + alpha-D-ribose 1-phosphate. The enzyme catalyses a purine 2'-deoxy-D-ribonucleoside + phosphate = a purine nucleobase + 2-deoxy-alpha-D-ribose 1-phosphate. In terms of biological role, catalyzes the reversible phosphorolytic breakdown of the N-glycosidic bond in the beta-(deoxy)ribonucleoside molecules, with the formation of the corresponding free purine bases and pentose-1-phosphate. This Alkaliphilus metalliredigens (strain QYMF) protein is Purine nucleoside phosphorylase DeoD-type.